A 230-amino-acid chain; its full sequence is uncharacterized protein (230 aa).

Positions 118 to 195 (LLDEILPKEP…SKREMERLER (78 aa)) are disordered. Basic residues predominate over residues 136–146 (QKKKEKRAALK). Composition is skewed to basic and acidic residues over residues 160 to 170 (ETDLYGDRDSF) and 179 to 195 (QRSEFRASKREMERLER).

This is an uncharacterized protein from Schizosaccharomyces pombe (strain 972 / ATCC 24843) (Fission yeast).